Reading from the N-terminus, the 105-residue chain is UPF0122 protein OB1530 (105 aa).

It belongs to the UPF0122 family.

Might take part in the signal recognition particle (SRP) pathway. This is inferred from the conservation of its genetic proximity to ftsY/ffh. May be a regulatory protein. The polypeptide is UPF0122 protein OB1530 (Oceanobacillus iheyensis (strain DSM 14371 / CIP 107618 / JCM 11309 / KCTC 3954 / HTE831)).